An 89-amino-acid polypeptide reads, in one-letter code: Dynein light chain LC6, flagellar outer arm (89 aa).

It belongs to the dynein light chain family. Consists of at least 3 heavy chains (alpha, beta and gamma), 2 intermediate chains and 8 light chains.

The protein localises to the cytoplasm. It localises to the cytoskeleton. It is found in the flagellum axoneme. The polypeptide is Dynein light chain LC6, flagellar outer arm (Heliocidaris crassispina (Sea urchin)).